Consider the following 431-residue polypeptide: 5-methylthioadenosine/S-adenosylhomocysteine deaminase (431 aa).

2 residues coordinate Zn(2+): His-66 and His-68. The substrate site is built by Glu-95, Arg-147, and His-185. Residue His-212 participates in Zn(2+) binding. Substrate is bound by residues Glu-215 and Asp-300. Residue Asp-300 coordinates Zn(2+).

This sequence belongs to the metallo-dependent hydrolases superfamily. MTA/SAH deaminase family. The cofactor is Zn(2+).

The catalysed reaction is S-adenosyl-L-homocysteine + H2O + H(+) = S-inosyl-L-homocysteine + NH4(+). It catalyses the reaction S-methyl-5'-thioadenosine + H2O + H(+) = S-methyl-5'-thioinosine + NH4(+). Functionally, catalyzes the deamination of 5-methylthioadenosine and S-adenosyl-L-homocysteine into 5-methylthioinosine and S-inosyl-L-homocysteine, respectively. Is also able to deaminate adenosine. This is 5-methylthioadenosine/S-adenosylhomocysteine deaminase from Desulfitobacterium hafniense (strain Y51).